The following is a 102-amino-acid chain: Cytochrome b (102 aa).

Transmembrane regions (helical) follow at residues 1–21 (FGSL…FLAM), 45–66 (WLMR…FLHI), and 81–101 (WNIG…GYVL). Positions 51 and 65 each coordinate heme b.

Belongs to the cytochrome b family. In terms of assembly, the cytochrome bc1 complex contains 3 respiratory subunits (MT-CYB, CYC1 and UQCRFS1), 2 core proteins (UQCRC1 and UQCRC2) and probably 6 low-molecular weight proteins. The cofactor is heme b.

It is found in the mitochondrion inner membrane. In terms of biological role, component of the ubiquinol-cytochrome c reductase complex (complex III or cytochrome b-c1 complex) that is part of the mitochondrial respiratory chain. The b-c1 complex mediates electron transfer from ubiquinol to cytochrome c. Contributes to the generation of a proton gradient across the mitochondrial membrane that is then used for ATP synthesis. In Ambystoma tigrinum (Eastern tiger salamander), this protein is Cytochrome b (mt-cyb).